The primary structure comprises 541 residues: Glucans biosynthesis protein D (541 aa).

The tat-type signal signal peptide spans 1–29 (MHRRNLLKASMAIAAYTGLSASGLLAAQA).

Belongs to the OpgD/OpgG family. In terms of processing, predicted to be exported by the Tat system. The position of the signal peptide cleavage has not been experimentally proven.

The protein localises to the periplasm. It functions in the pathway glycan metabolism; osmoregulated periplasmic glucan (OPG) biosynthesis. In terms of biological role, probably involved in the control of the structural glucose backbone of osmoregulated periplasmic glucans (OPGs). In Pseudomonas fluorescens (strain SBW25), this protein is Glucans biosynthesis protein D.